A 319-amino-acid polypeptide reads, in one-letter code: Putative protein phosphatase 2C 23 (319 aa).

Residues 73–314 (AVRMESASCY…DDITVVVACI (242 aa)) enclose the PPM-type phosphatase domain. Mn(2+) is bound by residues G102, D235, and D305.

The protein belongs to the PP2C family. It depends on Mg(2+) as a cofactor.

The catalysed reaction is O-phospho-L-seryl-[protein] + H2O = L-seryl-[protein] + phosphate. It catalyses the reaction O-phospho-L-threonyl-[protein] + H2O = L-threonyl-[protein] + phosphate. The chain is Putative protein phosphatase 2C 23 from Oryza sativa subsp. japonica (Rice).